A 105-amino-acid polypeptide reads, in one-letter code: Malonate decarboxylase acyl carrier protein (105 aa).

The residue at position 28 (Ser-28) is an O-(phosphoribosyl dephospho-coenzyme A)serine.

It belongs to the MdcC family. Covalently binds the prosthetic group of malonate decarboxylase.

The protein resides in the cytoplasm. Its function is as follows. Subunit of malonate decarboxylase, it is an acyl carrier protein to which acetyl and malonyl thioester residues are bound via a 2'-(5''-phosphoribosyl)-3'-dephospho-CoA prosthetic group and turn over during the catalytic mechanism. The chain is Malonate decarboxylase acyl carrier protein from Xanthomonas campestris pv. campestris (strain 8004).